A 320-amino-acid polypeptide reads, in one-letter code: MRSAQVYRWQIPMDAGVVLRDRRLKTRDGLYVCLREGEREGWGEISPLPGFSQETWEEAQSVLLAWVNNWLAGDCELPQMPSVAFGVSCALAELTDALPQAANYRAAPLCNGDPDDLILKLADMPGEKVAKVKVGLYEAVRDGMVVNLLLEAIPDLHLRLDANRAWTPLKGQQFAKYVNPDYRHRIAFLEEPCKTRDDSRAFARETGIAIAWDESLREPDFTFVAEEGVRAVVIKPTLTGSLEKVREQVEAAHALGLTAVISSSIESSLGLTQLARIAAWLTPETIPGLDTLDLMQAQQVRRWPGSTLPVVEVDALERLL.

The active-site Proton donor is the K133. 3 residues coordinate Mg(2+): D161, E190, and D213. The active-site Proton acceptor is the K235.

Belongs to the mandelate racemase/muconate lactonizing enzyme family. MenC type 1 subfamily. A divalent metal cation serves as cofactor.

The enzyme catalyses (1R,6R)-6-hydroxy-2-succinyl-cyclohexa-2,4-diene-1-carboxylate = 2-succinylbenzoate + H2O. The protein operates within quinol/quinone metabolism; 1,4-dihydroxy-2-naphthoate biosynthesis; 1,4-dihydroxy-2-naphthoate from chorismate: step 4/7. It functions in the pathway quinol/quinone metabolism; menaquinone biosynthesis. Functionally, converts 2-succinyl-6-hydroxy-2,4-cyclohexadiene-1-carboxylate (SHCHC) to 2-succinylbenzoate (OSB). This Escherichia coli O17:K52:H18 (strain UMN026 / ExPEC) protein is o-succinylbenzoate synthase.